The primary structure comprises 123 residues: Prismalin-14 (123 aa).

An N-terminal signal peptide occupies residues 1–16 (MRSLLVLLALAACASA).

As to expression, prismatic layer of shell (at protein level). Expressed primarily in the mantle with highest level in the mantle edge and lower level in the mantle pallium.

The protein localises to the secreted. Functionally, may be involved in calcification of the prismatic layer of the shell. The chain is Prismalin-14 from Margaritifera margaritifera (Freshwater pearl mussel).